The following is a 438-amino-acid chain: Enolase (438 aa).

Substrate contacts are provided by His-159 and Glu-168. The Proton donor role is filled by Glu-211. Asp-246, Glu-297, and Asp-322 together coordinate Mg(2+). Residues Glu-297 and Asp-322 each contribute to the substrate site. Catalysis depends on Lys-347, which acts as the Proton acceptor. Substrate-binding positions include Ser-374–Ser-377 and Lys-398.

The protein belongs to the enolase family. As to quaternary structure, homodimer. The cofactor is Mg(2+).

It is found in the cytoplasm. It catalyses the reaction (2R)-2-phosphoglycerate = phosphoenolpyruvate + H2O. The protein operates within carbohydrate degradation; glycolysis; pyruvate from D-glyceraldehyde 3-phosphate: step 4/5. The protein is Enolase (enoA) of Penicillium chrysogenum (Penicillium notatum).